Reading from the N-terminus, the 360-residue chain is Photosystem II protein D1 (360 aa).

A run of 3 helical transmembrane segments spans residues 29–46, 118–133, and 142–156; these read YVGW…TATT, QFLI…QWEL, and WICV…ARTA. A pheophytin a-binding site is contributed by Tyr126. Positions 170 and 189 each coordinate [CaMn4O5] cluster. Residues 197–218 traverse the membrane as a helical segment; sequence FHMLGVAGVFGGSLFSAMHGSL. Chlorophyll a is bound at residue His198. A quinone contacts are provided by residues His215 and 264-265; that span reads SF. A Fe cation-binding site is contributed by His215. His272 contacts Fe cation. The chain crosses the membrane as a helical span at residues 274–288; it reads FLGAWPVIGIWFTAM. Residues His332, Glu333, Asp342, and Ala344 each contribute to the [CaMn4O5] cluster site. Positions 345-360 are excised as a propeptide; the sequence is SGEQAPVALTAPAING.

The protein belongs to the reaction center PufL/M/PsbA/D family. PSII is composed of 1 copy each of membrane proteins PsbA, PsbB, PsbC, PsbD, PsbE, PsbF, PsbH, PsbI, PsbJ, PsbK, PsbL, PsbM, PsbT, PsbX, PsbY, PsbZ, Psb30/Ycf12, peripheral proteins PsbO, CyanoQ (PsbQ), PsbU, PsbV and a large number of cofactors. It forms dimeric complexes. The cofactor is The D1/D2 heterodimer binds P680, chlorophylls that are the primary electron donor of PSII, and subsequent electron acceptors. It shares a non-heme iron and each subunit binds pheophytin, quinone, additional chlorophylls, carotenoids and lipids. D1 provides most of the ligands for the Mn4-Ca-O5 cluster of the oxygen-evolving complex (OEC). There is also a Cl(-1) ion associated with D1 and D2, which is required for oxygen evolution. The PSII complex binds additional chlorophylls, carotenoids and specific lipids.. Tyr-161 forms a radical intermediate that is referred to as redox-active TyrZ, YZ or Y-Z. In terms of processing, C-terminally processed by CtpA; processing is essential to allow assembly of the oxygen-evolving complex and thus photosynthetic growth.

Its subcellular location is the cellular thylakoid membrane. The catalysed reaction is 2 a plastoquinone + 4 hnu + 2 H2O = 2 a plastoquinol + O2. In terms of biological role, photosystem II (PSII) is a light-driven water:plastoquinone oxidoreductase that uses light energy to abstract electrons from H(2)O, generating O(2) and a proton gradient subsequently used for ATP formation. It consists of a core antenna complex that captures photons, and an electron transfer chain that converts photonic excitation into a charge separation. The D1/D2 (PsbA/PsbD) reaction center heterodimer binds P680, the primary electron donor of PSII as well as several subsequent electron acceptors. This chain is Photosystem II protein D1, found in Synechocystis sp. (strain PCC 6714) (Aphanocapsa sp. (strain PCC 6714)).